The following is a 262-amino-acid chain: 5'-nucleotidase SurE (262 aa).

Residues Asp-8, Asp-9, Ser-40, and Asn-92 each contribute to the a divalent metal cation site.

The protein belongs to the SurE nucleotidase family. A divalent metal cation serves as cofactor.

The protein resides in the cytoplasm. It catalyses the reaction a ribonucleoside 5'-phosphate + H2O = a ribonucleoside + phosphate. Its function is as follows. Nucleotidase that shows phosphatase activity on nucleoside 5'-monophosphates. The polypeptide is 5'-nucleotidase SurE (Xylella fastidiosa (strain M23)).